A 166-amino-acid chain; its full sequence is Large ribosomal subunit protein bL17 (166 aa).

Residues 122–166 (PESAPVKAKQDRSKRVRGSKKTQEGSEKAEVSASAGEAAAVTEEK) are disordered. The segment covering 142–151 (KTQEGSEKAE) has biased composition (basic and acidic residues). Residues 152 to 166 (VSASAGEAAAVTEEK) are compositionally biased toward low complexity.

The protein belongs to the bacterial ribosomal protein bL17 family. In terms of assembly, part of the 50S ribosomal subunit. Contacts protein L32.

This is Large ribosomal subunit protein bL17 from Chlorobium phaeobacteroides (strain BS1).